The primary structure comprises 119 residues: MSEKKGRKEEVVTREYTINLHRRLHSCTFKKKAPKAIKEIRKFAEKEMGTKDVRVDVKLNKQIWSKGIRGPPRRIRVRVARKRNDDEDAKEEFFSLVTVAEIPAEGLSGLGTKIIEEED.

Belongs to the eukaryotic ribosomal protein eL31 family.

The chain is Large ribosomal subunit protein eL31y (RPL31B) from Arabidopsis thaliana (Mouse-ear cress).